Consider the following 136-residue polypeptide: NLP effector protein 13 (136 aa).

Residues 1 to 9 (MYSWYFPKD) carry the Conserved undecapeptide motif I motif. Positions 16–22 (GHRHDWE) match the Hepta-peptide GHRHDWE motif II motif.

Belongs to the Necrosis inducing protein (NPP1) family.

It is found in the secreted. Secreted effector that contributes moderately to virulence during infection by P.capsici. Causes only small yellow areas at 3 days after inoculation of host C.annuum leaves; these areas expand somewhat and became necrotic at 7 days after inoculation. Leads only to chlorotic areas, without necrosis at 7 days after non-host N.benthamiana leaves infection. The chain is NLP effector protein 13 from Phytophthora capsici.